We begin with the raw amino-acid sequence, 566 residues long: Glucose starvation modulator protein 1 (566 aa).

Positions 20–48 form a DNA-binding region, zn(2)-C6 fungal-type; sequence CVFCHQKHLQCSNERPCKNCVKRNIAHGC. Disordered stretches follow at residues 63 to 92 and 250 to 270; these read GVPG…SPMD and KQAS…NTLS. The span at 253-270 shows a compositional bias: low complexity; sequence SPSPSNTSTSENNTNTLS.

It belongs to the ERT1/acuK family.

The protein localises to the nucleus. In terms of biological role, transcription factor which regulates nonfermentable carbon utilization. The sequence is that of Glucose starvation modulator protein 1 (GSM1) from Candida albicans (strain WO-1) (Yeast).